The primary structure comprises 93 residues: Putative regulatory protein LA_2599 (93 aa).

Belongs to the RemA family.

In Leptospira interrogans serogroup Icterohaemorrhagiae serovar Lai (strain 56601), this protein is Putative regulatory protein LA_2599.